Here is a 982-residue protein sequence, read N- to C-terminus: Pentatricopeptide repeat-containing protein At5g62370 (982 aa).

PPR repeat units lie at residues 94–129 (DSSCYGALIRKLTEMGQPGVAETFYNQRVIGNGIVP), 130–164 (DSSVLDSMVFCLVKLRRFDEARAHLDRIIASGYAP), 165–199 (SRNSSSLVVDELCNQDRFLEAFHCFEQVKERGSGL), 200–234 (WLWCCKRLFKGLCGHGHLNEAIGMLDTLCGMTRMP), 236–270 (PVNLYKSLFYCFCKRGCAAEAEALFDHMEVDGYYV), 271–305 (DKVMYTCLMKEYCKDNNMTMAMRLYLRMVERSFEL), 306–340 (DPCIFNTLIHGFMKLGMLDKGRVMFSQMIKKGVQS), 341–376 (NVFTYHIMIGSYCKEGNVDYALRLFVNNTGSEDISR), 377–411 (NVHCYTNLIFGFYKKGGMDKAVDLLMRMLDNGIVP), 412–446 (DHITYFVLLKMLPKCHELKYAMVILQSILDNGCGI), 476–510 (AAVGLAVVTTALCSQRNYIAALSRIEKMVNLGCTP), 511–545 (LPFSYNSVIKCLFQENIIEDLASLVNIIQELDFVP), 546–580 (DVDTYLIVVNELCKKNDRDAAFAIIDAMEELGLRP), 581–615 (TVAIYSSIIGSLGKQGRVVEAEETFAKMLESGIQP), 616–650 (DEIAYMIMINTYARNGRIDEANELVEEVVKHFLRP), 651–685 (SSFTYTVLISGFVKMGMMEKGCQYLDKMLEDGLSP), 686–720 (NVVLYTALIGHFLKKGDFKFSFTLFGLMGENDIKH), 721–755 (DHIAYITLLSGLWRAMARKKKRQVIVEPGKEKLLQ), 759–789 (RTKPLVSIPSSLGNYGSKSFAMEVIGKVKKS), 793–827 (NLYLHNTIITGYCAAGRLDEAYNHLESMQKEGIVP), 828–858 (NLVTYTILMKSHIEAGDIESAIDLFEGTNCE), 860–894 (DQVMYSTLLKGLCDFKRPLDALALMLEMQKSGINP), 895–929 (NKDSYEKLLQCLCYSRLTMEAVKVVKDMAALDIWP), and 930–964 (RSINHTWLIYILCEEKKLREARALFAIMVQSGRSL).

Belongs to the PPR family. P subfamily.

The chain is Pentatricopeptide repeat-containing protein At5g62370 from Arabidopsis thaliana (Mouse-ear cress).